Here is a 251-residue protein sequence, read N- to C-terminus: Triosephosphate isomerase (251 aa).

9–11 (NWK) lines the substrate pocket. The Electrophile role is filled by histidine 94. Glutamate 163 acts as the Proton acceptor in catalysis. Substrate is bound by residues glycine 169, serine 209, and 230-231 (GG).

Belongs to the triosephosphate isomerase family. In terms of assembly, homodimer.

The protein resides in the cytoplasm. It catalyses the reaction D-glyceraldehyde 3-phosphate = dihydroxyacetone phosphate. The protein operates within carbohydrate biosynthesis; gluconeogenesis. It functions in the pathway carbohydrate degradation; glycolysis; D-glyceraldehyde 3-phosphate from glycerone phosphate: step 1/1. In terms of biological role, involved in the gluconeogenesis. Catalyzes stereospecifically the conversion of dihydroxyacetone phosphate (DHAP) to D-glyceraldehyde-3-phosphate (G3P). This chain is Triosephosphate isomerase, found in Dehalococcoides mccartyi (strain ATCC BAA-2266 / KCTC 15142 / 195) (Dehalococcoides ethenogenes (strain 195)).